The chain runs to 412 residues: [Pyruvate dehydrogenase (acetyl-transferring)] kinase isozyme 4, mitochondrial (412 aa).

Residues 138–368 (ILEYKDTCTV…DAIIYLKALS (231 aa)) enclose the Histidine kinase domain. ATP-binding positions include 254–261 (ELFKNAMR), Asp-293, 312–313 (ST), and 329–334 (GFGYGL).

This sequence belongs to the PDK/BCKDK protein kinase family. Homodimer. Interacts with the pyruvate dehydrogenase complex subunit DLAT, and is part of the multimeric pyruvate dehydrogenase complex that contains multiple copies of pyruvate dehydrogenase (E1), dihydrolipoamide acetyltransferase (DLAT, E2) and lipoamide dehydrogenase (DLD, E3).

It is found in the mitochondrion matrix. It carries out the reaction L-seryl-[pyruvate dehydrogenase E1 alpha subunit] + ATP = O-phospho-L-seryl-[pyruvate dehydrogenase E1 alpha subunit] + ADP + H(+). Functionally, kinase that plays a key role in regulation of glucose and fatty acid metabolism and homeostasis via phosphorylation of the pyruvate dehydrogenase subunits PDHA1 and PDHA2. This inhibits pyruvate dehydrogenase activity, and thereby regulates metabolite flux through the tricarboxylic acid cycle, down-regulates aerobic respiration and inhibits the formation of acetyl-coenzyme A from pyruvate. Inhibition of pyruvate dehydrogenase decreases glucose utilization and increases fat metabolism in response to prolonged fasting and starvation. Plays an important role in maintaining normal blood glucose levels under starvation, and is involved in the insulin signaling cascade. Via its regulation of pyruvate dehydrogenase activity, plays an important role in maintaining normal blood pH and in preventing the accumulation of ketone bodies under starvation. In the fed state, mediates cellular responses to glucose levels and to a high-fat diet. Regulates both fatty acid oxidation and de novo fatty acid biosynthesis. Plays a role in the generation of reactive oxygen species. Protects detached epithelial cells against anoikis. Plays a role in cell proliferation via its role in regulating carbohydrate and fatty acid metabolism. The protein is [Pyruvate dehydrogenase (acetyl-transferring)] kinase isozyme 4, mitochondrial (Pdk4) of Mus musculus (Mouse).